Consider the following 214-residue polypeptide: GTP-binding nuclear protein GSP1/Ran (214 aa).

Positions glutamate 4–asparagine 168 constitute a Small GTPase Ran-type domain. Residue aspartate 15 to threonine 22 coordinates GTP. Positions asparagine 34 to valine 42 are switch-I. Residues glycine 65, asparagine 119–aspartate 122, and serine 147–lysine 149 each bind GTP. Positions glycine 65–glutamine 81 are switch-II.

Belongs to the small GTPase superfamily. Ran family. In terms of assembly, found in a nuclear export complex with RanGTP, exportin and pre-miRNA.

The protein localises to the nucleus. Its function is as follows. GTP-binding protein involved in nucleocytoplasmic transport. Required for the import of protein into the nucleus and also for RNA export. Involved in chromatin condensation and control of cell cycle. The chain is GTP-binding nuclear protein GSP1/Ran (GSP1) from Yarrowia lipolytica (strain CLIB 122 / E 150) (Yeast).